Consider the following 390-residue polypeptide: Probable galacturonosyltransferase-like 9 (390 aa).

The Cytoplasmic segment spans residues methionine 1–alanine 10. Residues valine 11–isoleucine 31 form a helical; Signal-anchor for type II membrane protein membrane-spanning segment. Topologically, residues proline 32–phenylalanine 390 are lumenal. 2 N-linked (GlcNAc...) asparagine glycosylation sites follow: asparagine 205 and asparagine 223.

Belongs to the glycosyltransferase 8 family.

Its subcellular location is the golgi apparatus membrane. The protein operates within glycan metabolism; pectin biosynthesis. Its function is as follows. May be involved in pectin and/or xylans biosynthesis in cell walls. The polypeptide is Probable galacturonosyltransferase-like 9 (GATL9) (Arabidopsis thaliana (Mouse-ear cress)).